Reading from the N-terminus, the 152-residue chain is Lipoprotein signal peptidase (152 aa).

The next 2 helical transmembrane spans lie at 55–75 (NKMW…VFYM) and 85–105 (LGIS…DRVF). Active-site residues include D111 and D129. The chain crosses the membrane as a helical span at residues 124 to 144 (VFNIADSALCIGVVLIIIQTL).

The protein belongs to the peptidase A8 family.

It is found in the cell membrane. It carries out the reaction Release of signal peptides from bacterial membrane prolipoproteins. Hydrolyzes -Xaa-Yaa-Zaa-|-(S,diacylglyceryl)Cys-, in which Xaa is hydrophobic (preferably Leu), and Yaa (Ala or Ser) and Zaa (Gly or Ala) have small, neutral side chains.. The protein operates within protein modification; lipoprotein biosynthesis (signal peptide cleavage). In terms of biological role, this protein specifically catalyzes the removal of signal peptides from prolipoproteins. The protein is Lipoprotein signal peptidase of Bacillus cereus (strain G9842).